A 94-amino-acid polypeptide reads, in one-letter code: DNA-directed RNA polymerase subunit omega (94 aa).

Belongs to the RNA polymerase subunit omega family. In terms of assembly, the RNAP catalytic core consists of 2 alpha, 1 beta, 1 beta' and 1 omega subunit. When a sigma factor is associated with the core the holoenzyme is formed, which can initiate transcription.

It carries out the reaction RNA(n) + a ribonucleoside 5'-triphosphate = RNA(n+1) + diphosphate. Functionally, promotes RNA polymerase assembly. Latches the N- and C-terminal regions of the beta' subunit thereby facilitating its interaction with the beta and alpha subunits. This is DNA-directed RNA polymerase subunit omega from Frankia casuarinae (strain DSM 45818 / CECT 9043 / HFP020203 / CcI3).